Here is a 548-residue protein sequence, read N- to C-terminus: Chaperonin GroEL (548 aa).

Residues 30 to 33 (TLGP), lysine 51, 87 to 91 (DGTTT), glycine 415, and aspartate 495 contribute to the ATP site.

Belongs to the chaperonin (HSP60) family. In terms of assembly, forms a cylinder of 14 subunits composed of two heptameric rings stacked back-to-back. Interacts with the co-chaperonin GroES.

The protein resides in the cytoplasm. It carries out the reaction ATP + H2O + a folded polypeptide = ADP + phosphate + an unfolded polypeptide.. In terms of biological role, together with its co-chaperonin GroES, plays an essential role in assisting protein folding. The GroEL-GroES system forms a nano-cage that allows encapsulation of the non-native substrate proteins and provides a physical environment optimized to promote and accelerate protein folding. The polypeptide is Chaperonin GroEL (Colwellia psychrerythraea (strain 34H / ATCC BAA-681) (Vibrio psychroerythus)).